A 247-amino-acid chain; its full sequence is DNA polymerase sliding clamp 1 (247 aa).

The protein belongs to the PCNA family. As to quaternary structure, homotrimer. The subunits circularize to form a toroid; DNA passes through its center. Replication factor C (RFC) is required to load the toroid on the DNA.

Functionally, sliding clamp subunit that acts as a moving platform for DNA processing. Responsible for tethering the catalytic subunit of DNA polymerase and other proteins to DNA during high-speed replication. The protein is DNA polymerase sliding clamp 1 of Sulfolobus acidocaldarius (strain ATCC 33909 / DSM 639 / JCM 8929 / NBRC 15157 / NCIMB 11770).